The sequence spans 248 residues: Cutinase (248 aa).

A signal peptide spans 1-17 (MRSLAILTTLLAGHAFA). The propeptide occupies 18-28 (YPKPAPQSVNR). Residues 31–70 (WPSINEFLSELAKVMPIGDTITAACDLISDGEDAAASLFG) form a lid covering the active site of the uncomplexed enzyme region. Intrachain disulfides connect C55-C91 and C79-C153. The active-site Nucleophile is S164. C212 and C219 form a disulfide bridge. Residue D216 is part of the active site. H229 serves as the catalytic Proton donor/acceptor.

Belongs to the cutinase family.

The protein localises to the secreted. The catalysed reaction is cutin + H2O = cutin monomers.. Its activity is regulated as follows. Weakly inhibited by n-undecyl phosphonate (C11Y4). Activity unaffected by paraoxon. Functionally, catalyzes the hydrolysis of complex carboxylic polyesters found in the cell wall of plants. Degrades cutin, a macromolecule that forms the structure of the plant cuticle. The polypeptide is Cutinase (Hypocrea jecorina (strain QM6a) (Trichoderma reesei)).